A 118-amino-acid chain; its full sequence is Large ribosomal subunit protein uL22 (118 aa).

The protein belongs to the universal ribosomal protein uL22 family. As to quaternary structure, part of the 50S ribosomal subunit.

Functionally, this protein binds specifically to 23S rRNA; its binding is stimulated by other ribosomal proteins, e.g. L4, L17, and L20. It is important during the early stages of 50S assembly. It makes multiple contacts with different domains of the 23S rRNA in the assembled 50S subunit and ribosome. Its function is as follows. The globular domain of the protein is located near the polypeptide exit tunnel on the outside of the subunit, while an extended beta-hairpin is found that lines the wall of the exit tunnel in the center of the 70S ribosome. The chain is Large ribosomal subunit protein uL22 from Synechococcus sp. (strain RCC307).